The sequence spans 515 residues: Meiotically up-regulated gene 68 protein (515 aa).

Positions 165 to 204 (LHSIESERNESSLSLDSGESEKKSEEDNGNGEQNYIPEQY) are disordered.

Functionally, has a role in meiosis. This chain is Meiotically up-regulated gene 68 protein (mug68), found in Schizosaccharomyces pombe (strain 972 / ATCC 24843) (Fission yeast).